Here is a 416-residue protein sequence, read N- to C-terminus: Phosphoglycerate kinase (416 aa).

Val-23, Asp-24, Phe-25, Asn-26, Gln-38, Arg-39, Ser-62, His-63, Gly-65, Arg-66, Leu-121, Arg-122, His-168, and Arg-169 together coordinate (2R)-3-phosphoglycerate. ADP is bound at residue Gly-212. A CDP-binding site is contributed by Gly-212. Ala-213 and Lys-214 together coordinate AMP. An ATP-binding site is contributed by Ala-213. Ala-213 provides a ligand contact to Mg(2+). Asp-217 is a CDP binding site. A Mg(2+)-binding site is contributed by Asp-217. Lys-218 is an AMP binding site. Lys-218 is an ATP binding site. Gly-236 contacts ADP. Gly-236 is a binding site for CDP. AMP is bound by residues Gly-237 and Gly-311. Residues Gly-237 and Gly-311 each coordinate ATP. CDP-binding residues include Gly-336 and Phe-341. Residue Phe-341 coordinates ADP. Residue Glu-342 coordinates AMP. ATP-binding residues include Glu-342, Asp-373, and Thr-374. Asp-373 is a Mg(2+) binding site.

It belongs to the phosphoglycerate kinase family. In terms of assembly, monomer. Mg(2+) is required as a cofactor.

It localises to the cytoplasm. Its subcellular location is the mitochondrion. The enzyme catalyses (2R)-3-phosphoglycerate + ATP = (2R)-3-phospho-glyceroyl phosphate + ADP. Its pathway is carbohydrate degradation; glycolysis; pyruvate from D-glyceraldehyde 3-phosphate: step 2/5. Functionally, catalyzes one of the two ATP producing reactions in the glycolytic pathway via the reversible conversion of 1,3-diphosphoglycerate to 3-phosphoglycerate. Both L- and D- forms of purine and pyrimidine nucleotides can be used as substrates, but the activity is much lower on pyrimidines. Negatively regulates the biosynthesis of acetyl-CoA from pyruvate in the mitochondrion. The polypeptide is Phosphoglycerate kinase (PGK1) (Debaryomyces hansenii (strain ATCC 36239 / CBS 767 / BCRC 21394 / JCM 1990 / NBRC 0083 / IGC 2968) (Yeast)).